The primary structure comprises 1479 residues: Chromosome partition protein MukB (1479 aa).

34–41 (GGNGAGKS) lines the ATP pocket. 5 coiled-coil regions span residues 337-418 (LNLV…QYQQ), 511-604 (QAER…APVW), 780-810 (RAAR…DVQK), 847-1116 (ELDR…AKAG), and 1206-1265 (DDPV…LQAV). A flexible hinge region spans residues 666–783 (PGGSEDPRLN…EVPLFGRAAR (118 aa)).

It belongs to the SMC family. MukB subfamily. Homodimerization via its hinge domain. Binds to DNA via its C-terminal region. Interacts, and probably forms a ternary complex, with MukE and MukF via its C-terminal region. The complex formation is stimulated by calcium or magnesium. Interacts with tubulin-related protein FtsZ.

It localises to the cytoplasm. The protein resides in the nucleoid. Plays a central role in chromosome condensation, segregation and cell cycle progression. Functions as a homodimer, which is essential for chromosome partition. Involved in negative DNA supercoiling in vivo, and by this means organize and compact chromosomes. May achieve or facilitate chromosome segregation by condensation DNA from both sides of a centrally located replisome during cell division. The sequence is that of Chromosome partition protein MukB from Pectobacterium atrosepticum (strain SCRI 1043 / ATCC BAA-672) (Erwinia carotovora subsp. atroseptica).